The primary structure comprises 279 residues: NADPH-dependent 7-cyano-7-deazaguanine reductase (279 aa).

Residue 86-88 (IES) participates in substrate binding. Residue 88-89 (SK) coordinates NADPH. C187 acts as the Thioimide intermediate in catalysis. D194 acts as the Proton donor in catalysis. 226–227 (HE) is a binding site for substrate. NADPH is bound at residue 255–256 (RG).

Belongs to the GTP cyclohydrolase I family. QueF type 2 subfamily. Homodimer.

It localises to the cytoplasm. The catalysed reaction is 7-aminomethyl-7-carbaguanine + 2 NADP(+) = 7-cyano-7-deazaguanine + 2 NADPH + 3 H(+). Its pathway is tRNA modification; tRNA-queuosine biosynthesis. In terms of biological role, catalyzes the NADPH-dependent reduction of 7-cyano-7-deazaguanine (preQ0) to 7-aminomethyl-7-deazaguanine (preQ1). This chain is NADPH-dependent 7-cyano-7-deazaguanine reductase, found in Histophilus somni (strain 129Pt) (Haemophilus somnus).